Reading from the N-terminus, the 206-residue chain is ATP-dependent Clp protease proteolytic subunit (206 aa).

Ser110 acts as the Nucleophile in catalysis. The active site involves His135.

Belongs to the peptidase S14 family. Fourteen ClpP subunits assemble into 2 heptameric rings which stack back to back to give a disk-like structure with a central cavity, resembling the structure of eukaryotic proteasomes.

The protein localises to the cytoplasm. It catalyses the reaction Hydrolysis of proteins to small peptides in the presence of ATP and magnesium. alpha-casein is the usual test substrate. In the absence of ATP, only oligopeptides shorter than five residues are hydrolyzed (such as succinyl-Leu-Tyr-|-NHMec, and Leu-Tyr-Leu-|-Tyr-Trp, in which cleavage of the -Tyr-|-Leu- and -Tyr-|-Trp bonds also occurs).. Its function is as follows. Cleaves peptides in various proteins in a process that requires ATP hydrolysis. Has a chymotrypsin-like activity. Plays a major role in the degradation of misfolded proteins. The sequence is that of ATP-dependent Clp protease proteolytic subunit from Edwardsiella ictaluri (strain 93-146).